Here is a 53-residue protein sequence, read N- to C-terminus: Small, acid-soluble spore protein K (53 aa).

The interval 1 to 53 (MGRQAEFWSESKNNSKIDGQPKAKARFASKRPNGTINTHPQERMRAANQQEEE) is disordered.

Belongs to the SspK family.

Its subcellular location is the spore core. This chain is Small, acid-soluble spore protein K, found in Bacillus cytotoxicus (strain DSM 22905 / CIP 110041 / 391-98 / NVH 391-98).